The following is a 344-amino-acid chain: DNA-directed RNA polymerase subunit alpha (344 aa).

An alpha N-terminal domain (alpha-NTD) region spans residues M1 to P238. Positions D253–D344 are alpha C-terminal domain (alpha-CTD).

Belongs to the RNA polymerase alpha chain family. In terms of assembly, homodimer. The RNAP catalytic core consists of 2 alpha, 1 beta, 1 beta' and 1 omega subunit. When a sigma factor is associated with the core the holoenzyme is formed, which can initiate transcription.

The catalysed reaction is RNA(n) + a ribonucleoside 5'-triphosphate = RNA(n+1) + diphosphate. Its function is as follows. DNA-dependent RNA polymerase catalyzes the transcription of DNA into RNA using the four ribonucleoside triphosphates as substrates. The sequence is that of DNA-directed RNA polymerase subunit alpha from Helicobacter acinonychis (strain Sheeba).